The chain runs to 485 residues: GTPase Der (485 aa).

2 consecutive EngA-type G domains span residues 3–167 (PTIA…PEPE) and 176–349 (PVFA…NAAM). Residues 9–16 (GRPNVGKS), 56–60 (DTGGF), 119–122 (NKGE), 182–189 (GRPNVGKS), 229–233 (DTAGV), and 294–297 (NKWD) each bind GTP. The KH-like domain occupies 350 to 434 (IKMPTPKITR…PLRIQYNVSE (85 aa)). The tract at residues 435 to 485 (NPYENAEDKPKKKPLRRVSLSNRIEKREGRKEEKNRFKKKTKVSVKKQFSK) is disordered. Basic and acidic residues predominate over residues 457–469 (RIEKREGRKEEKN). Residues 470–485 (RFKKKTKVSVKKQFSK) show a composition bias toward basic residues.

The protein belongs to the TRAFAC class TrmE-Era-EngA-EngB-Septin-like GTPase superfamily. EngA (Der) GTPase family. In terms of assembly, associates with the 50S ribosomal subunit.

In terms of biological role, GTPase that plays an essential role in the late steps of ribosome biogenesis. This Neisseria meningitidis serogroup C / serotype 2a (strain ATCC 700532 / DSM 15464 / FAM18) protein is GTPase Der.